We begin with the raw amino-acid sequence, 98 residues long: Defensin-like protein 68 (98 aa).

The signal sequence occupies residues 1–19 (MGSSKLLVALTLVVMITIS). Intrachain disulfides connect Cys38–Cys88, Cys42–Cys65, Cys51–Cys86, and Cys55–Cys87.

This sequence belongs to the DEFL family.

Its subcellular location is the secreted. This is Defensin-like protein 68 from Arabidopsis thaliana (Mouse-ear cress).